The primary structure comprises 192 residues: Transcription antitermination protein NusB (192 aa).

This sequence belongs to the NusB family.

In terms of biological role, involved in transcription antitermination. Required for transcription of ribosomal RNA (rRNA) genes. Binds specifically to the boxA antiterminator sequence of the ribosomal RNA (rrn) operons. This is Transcription antitermination protein NusB from Lactococcus lactis subsp. lactis (strain IL1403) (Streptococcus lactis).